Reading from the N-terminus, the 169-residue chain is uncharacterized protein (169 aa).

This is an uncharacterized protein from Mycoplasma genitalium (strain ATCC 33530 / DSM 19775 / NCTC 10195 / G37) (Mycoplasmoides genitalium).